Reading from the N-terminus, the 458-residue chain is Mannan endo-1,6-alpha-mannosidase DFG5 (458 aa).

Residues 1 to 26 form the signal peptide; sequence MIVNISAKMILSICFTFLSFFKATHA. 9 N-linked (GlcNAc...) asparagine glycosylation sites follow: Asn89, Asn114, Asn138, Asn208, Asn231, Asn245, Asn270, Asn273, and Asn417. The segment at 399–418 is disordered; sequence PYKEDNGGTSKGDANAGMNS. Gly437 is lipidated: GPI-anchor amidated glycine. Residues 438 to 458 constitute a propeptide, removed in mature form; the sequence is AAIITAVILSVLTGGAVWMLF.

This sequence belongs to the glycosyl hydrolase 76 family. N-glycosylated.

The protein resides in the cell membrane. The catalysed reaction is Random hydrolysis of (1-&gt;6)-alpha-D-mannosidic linkages in unbranched (1-&gt;6)-mannans.. Functionally, required for normal synthesis of the cell wall. This chain is Mannan endo-1,6-alpha-mannosidase DFG5 (DFG5), found in Saccharomyces cerevisiae (strain ATCC 204508 / S288c) (Baker's yeast).